Consider the following 149-residue polypeptide: Calmodulin (149 aa).

Position 2 is an N-acetylalanine (Ala2). 4 EF-hand domains span residues 8-43, 44-79, 81-116, and 117-149; these read EQIS…LGQN, PTEA…KLKD, DTEE…LGEK, and LTNE…MIAK. Ca(2+) contacts are provided by Asp21, Asp23, Asp25, Thr27, Glu32, Asp57, Asp59, Asn61, Thr63, Glu68, Asp94, Asp96, Asp98, Tyr100, Glu105, Asp130, Asp132, Asp134, Gln136, and Glu141.

This sequence belongs to the calmodulin family.

It localises to the cytoplasm. Calmodulin mediates the control of a large number of enzymes, ion channels and other proteins by Ca(2+). Among the enzymes to be stimulated by the calmodulin-Ca(2+) complex are a number of protein kinases and phosphatases. In Plasmodium falciparum (isolate 3D7), this protein is Calmodulin.